A 258-amino-acid chain; its full sequence is Sec-independent protein translocase protein TatC (258 aa).

The Cytoplasmic portion of the chain corresponds to 2-23; it reads SVEDTQPLITHLIELRKRLLNC. A helical membrane pass occupies residues 24 to 44; it reads IISVIVIFLCLVYFANDIYHL. Residues 45–75 lie on the Periplasmic side of the membrane; the sequence is VSAPLIKQLPQGSTMIATDVASPFFTPIKLT. A helical membrane pass occupies residues 76–96; the sequence is FMVSLILSAPVILYQVWAFIA. Residues 97–115 lie on the Cytoplasmic side of the membrane; that stretch reads PALYKHERRLVVPLLVSSS. The helical transmembrane segment at 116-136 threads the bilayer; that stretch reads LLFYIGMAFAYFVVFPLAFGF. Topologically, residues 137–156 are periplasmic; the sequence is LANTAPEGVQVSTDIASYLS. Residues 157 to 177 traverse the membrane as a helical segment; that stretch reads FVMALFMAFGVSFEVPVAIVL. Residues 178 to 192 lie on the Cytoplasmic side of the membrane; it reads LCWMGITSPEDLRKK. The helical transmembrane segment at 193–210 threads the bilayer; sequence RPYVLVGAFVVGMLLTPP. Residue aspartate 211 is a topological domain, periplasmic. The helical transmembrane segment at 212–232 threads the bilayer; the sequence is VFSQTLLAIPMYCLFEIGVFF. Residues 233-258 lie on the Cytoplasmic side of the membrane; that stretch reads SRFYVGKGRNREEENDAEAESEKTEE.

The protein belongs to the TatC family. As to quaternary structure, the Tat system comprises two distinct complexes: a TatABC complex, containing multiple copies of TatA, TatB and TatC subunits, and a separate TatA complex, containing only TatA subunits. Substrates initially bind to the TatABC complex, which probably triggers association of the separate TatA complex to form the active translocon.

The protein localises to the cell inner membrane. Its function is as follows. Part of the twin-arginine translocation (Tat) system that transports large folded proteins containing a characteristic twin-arginine motif in their signal peptide across membranes. Together with TatB, TatC is part of a receptor directly interacting with Tat signal peptides. This chain is Sec-independent protein translocase protein TatC, found in Escherichia coli O6:H1 (strain CFT073 / ATCC 700928 / UPEC).